The following is a 511-amino-acid chain: Cytochrome P450 77A2 (511 aa).

Position 456 (Cys-456) interacts with heme.

This sequence belongs to the cytochrome P450 family. The cofactor is heme.

The sequence is that of Cytochrome P450 77A2 (CYP77A2) from Solanum melongena (Eggplant).